The following is a 122-amino-acid chain: Beta-2-microglobulin (122 aa).

A signal peptide spans 1–23 (MFLRSTFVAALVACLAYIHLGDA). The 90-residue stretch at 28 to 117 (PKVQIYSRNV…STLREATRFT (90 aa)) folds into the Ig-like C1-type domain. Cysteines 48 and 103 form a disulfide.

This sequence belongs to the beta-2-microglobulin family. In terms of assembly, heterodimer of an alpha chain and a beta chain. Beta-2-microglobulin is the beta-chain of major histocompatibility complex class I molecules.

The protein resides in the secreted. Component of the class I major histocompatibility complex (MHC). Involved in the presentation of peptide antigens to the immune system. This Acipenser baerii (Siberian sturgeon) protein is Beta-2-microglobulin (b2m).